The following is a 150-amino-acid chain: Ribonuclease K6 (150 aa).

The signal sequence occupies residues Met-1 to Ala-23. Catalysis depends on His-38, which acts as the Proton acceptor. Intrachain disulfides connect Cys-46–Cys-104, Cys-60–Cys-114, Cys-78–Cys-129, and Cys-85–Cys-92. Asn-55 carries N-linked (GlcNAc...) asparagine glycosylation. Residues Lys-61–Thr-65 and Lys-86 contribute to the substrate site. Asn-100 is a glycosylation site (N-linked (GlcNAc...) asparagine). Arg-105 is a binding site for substrate. Residue His-145 is the Proton donor of the active site.

The protein belongs to the pancreatic ribonuclease family. As to quaternary structure, interacts (via N-terminus) with bacterial lipopolysaccharide (LPS).

The protein localises to the secreted. It localises to the lysosome. Its subcellular location is the cytoplasmic granule. Ribonuclease which shows a preference for the pyrimidines uridine and cytosine. Has potent antibacterial activity against a range of Gram-positive and Gram-negative bacteria, including P.aeruginosa, A.baumanii, M.luteus, S.aureus, E.faecalis, E.faecium, S.saprophyticus and E.coli. Causes loss of bacterial membrane integrity, and also promotes agglutination of Gram-negative bacteria. Probably contributes to urinary tract sterility. Bactericidal activity is independent of RNase activity. The protein is Ribonuclease K6 (RNASE6) of Gorilla gorilla gorilla (Western lowland gorilla).